Reading from the N-terminus, the 158-residue chain is 18.1 kDa class I heat shock protein (158 aa).

Positions 44–158 constitute a sHSP domain; it reads ENPAFVSTRV…AEVKSIEISG (115 aa).

It belongs to the small heat shock protein (HSP20) family. In terms of assembly, forms oligomeric structures.

It localises to the cytoplasm. This Pisum sativum (Garden pea) protein is 18.1 kDa class I heat shock protein (HSP18.1).